We begin with the raw amino-acid sequence, 878 residues long: Phosphoenolpyruvate carboxylase (878 aa).

Catalysis depends on residues His-137 and Lys-545.

The protein belongs to the PEPCase type 1 family. Mg(2+) serves as cofactor.

It carries out the reaction oxaloacetate + phosphate = phosphoenolpyruvate + hydrogencarbonate. In terms of biological role, forms oxaloacetate, a four-carbon dicarboxylic acid source for the tricarboxylic acid cycle. The sequence is that of Phosphoenolpyruvate carboxylase from Yersinia pseudotuberculosis serotype O:1b (strain IP 31758).